The following is a 953-amino-acid chain: Coatomer subunit beta (953 aa).

At threonine 2 the chain carries N-acetylthreonine. HEAT repeat units lie at residues 96–131, 132–168, 240–276, 277–314, 316–353, and 396–433; these read HEMI…KEAE, LLEP…NFEH, SERA…SAPT, AIKA…HPAH, RVLQ…SRNV, and DMAA…RFDN. Position 494 is an N6-acetyllysine (lysine 494).

As to quaternary structure, oligomeric complex that consists of at least the alpha, beta, beta', gamma, delta, epsilon and zeta subunits. Interacts with CAPN8. Interacts with SCYL1 and PRKCE. Interacts with COPG1. Interacts with ARF1 (myristoylated); this interaction is required for binding of COPB1 to Golgi membranes. Interacts (via trunk domain) with ARF1 (via switch I region); the interaction is direct. Interacts with KCNK2 (via N-terminus); this interaction increases the channel-mediated whole cell currents and promotes plasma membrane expression of KCNK2. Interacts with STX17. Interacts with TMEM115. Interacts with TMEM41B. Proteolytically cleaved between Ser-528 and Ser-529 by CAPN8. Predominantly expressed in the upper one-third of the oxyntic mucosa and in most regions of the pyloric mucosa. Ubiquitously expressed including platelet, liver, heart, spleen, lung and kidney.

It localises to the cytoplasm. It is found in the golgi apparatus membrane. Its subcellular location is the cytoplasmic vesicle. The protein localises to the COPI-coated vesicle membrane. The protein resides in the cell membrane. It localises to the endoplasmic reticulum-Golgi intermediate compartment. Functionally, the coatomer is a cytosolic protein complex that binds to dilysine motifs and reversibly associates with Golgi non-clathrin-coated vesicles, which further mediate biosynthetic protein transport from the ER, via the Golgi up to the trans Golgi network. Coatomer complex is required for budding from Golgi membranes, and is essential for the retrograde Golgi-to-ER transport of dilysine-tagged proteins. In mammals, the coatomer can only be recruited by membranes associated to ADP-ribosylation factors (ARFs), which are small GTP-binding proteins; the complex also influences the Golgi structural integrity, as well as the processing, activity, and endocytic recycling of LDL receptors. Involved in the Golgi disassembly and reassembly processes during cell cycle. Involved in autophagy by playing a role in early endosome function. Plays a role in organellar compartmentalization of secretory compartments including endoplasmic reticulum (ER)-Golgi intermediate compartment (ERGIC), Golgi, trans-Golgi network (TGN) and recycling endosomes, and in biosynthetic transport of CAV1. Plays a functional role in facilitating the transport of kappa-type opioid receptor mRNAs into axons and enhances translation of these proteins in cortical neurons. Required for limiting lipid storage in lipid droplets. Involved in lipid homeostasis by regulating the presence of perilipin family members PLIN2 and PLIN3 at the lipid droplet surface and promoting the association of adipocyte triglyceride lipase (PNPLA2) with the lipid droplet surface to mediate lipolysis. This is Coatomer subunit beta (Copb1) from Mus musculus (Mouse).